Consider the following 869-residue polypeptide: Leucine--tRNA ligase (869 aa).

Positions 42-52 (PYPSGNLHMGH) match the 'HIGH' region motif. Residues 622-626 (KMSKS) carry the 'KMSKS' region motif. Lys-625 is a binding site for ATP.

The protein belongs to the class-I aminoacyl-tRNA synthetase family.

The protein resides in the cytoplasm. It catalyses the reaction tRNA(Leu) + L-leucine + ATP = L-leucyl-tRNA(Leu) + AMP + diphosphate. The sequence is that of Leucine--tRNA ligase from Synechocystis sp. (strain ATCC 27184 / PCC 6803 / Kazusa).